A 265-amino-acid polypeptide reads, in one-letter code: Secreted RxLR effector protein 16 (265 aa).

A signal peptide spans 1–19 (MRGAFYIAIALLIVRSRTA). A RxLR-dEER motif is present at residues 46–61 (RYLRGGLALSATNEER). N-linked (GlcNAc...) asparagine glycosylation is found at Asn-170, Asn-219, and Asn-240.

Belongs to the RxLR effector family. In terms of processing, N-glycosylated. The putative N-glycosylation site at position 240 is essential for cell death-inducing activity.

It localises to the secreted. It is found in the host nucleus. In terms of biological role, effector that acts as an elicitor that induces cell death and promotes ROS accumulation in Nicotian benthamiana. RxLR16-triggered cell death is dependent on SGT1, HSP90 and RAR1, but independent of the somatic embryogenesis receptor-like kinase SERK3/BAK1, indicating that it acts independently of the detection of cell surface pattern recognition receptors. Enhances the expressional levels of defense-associated genes involved in the salicylic acid-, jasmonate acid-, and ethylene-mediated signal transduction, resulting in disease resistance. However, as some other Plasmopara viticola RxLR effectors including RxLR1, RxLR10, RxLR30 and RxLR25, can suppress defense responses and disease resistance induced by RxLR16, it may not trigger host cell death or immune responses during physiological infection under natural conditions. The sequence is that of Secreted RxLR effector protein 16 from Plasmopara viticola (Downy mildew of grapevine).